The sequence spans 502 residues: Probable mitochondrial-processing peptidase subunit alpha (502 aa).

It belongs to the peptidase M16 family. Heterodimer of mas2 (alpha) and mas1 (beta) subunits, forming the mitochondrial processing protease (MPP) in which mas2 is involved in substrate recognition and binding and mas1 is the catalytic subunit.

It localises to the mitochondrion matrix. Functionally, substrate recognition and binding subunit of the essential mitochondrial processing protease (MPP), which cleaves the mitochondrial sequence off newly imported precursors proteins. This chain is Probable mitochondrial-processing peptidase subunit alpha (mas2), found in Schizosaccharomyces pombe (strain 972 / ATCC 24843) (Fission yeast).